A 728-amino-acid polypeptide reads, in one-letter code: Ribosome biogenesis protein bop1-B (728 aa).

The tract at residues 1–114 is disordered; sequence MKRGSKRESG…ENDSSDEEDI (114 aa). Residues 50 to 67 are compositionally biased toward acidic residues; it reads SGTDSSDDEEDHSSEEVQ. WD repeat units lie at residues 393–432, 434–474, 514–556, 559–597, 600–639, 643–682, and 698–728; these read GHKD…CMKS, VLEG…RLLC, KHQK…SQNP, KNKG…LTKK, TNCK…KPYK, HHKK…DLLQ, and HRDL…RLFT.

Belongs to the WD repeat BOP1/ERB1 family. In terms of assembly, component of the PeBoW complex, composed of bop1, pes1 and wdr12. The complex is held together by bop1, which interacts with pes1 via its N-terminal domain and with wdr12 via a high-affinity interaction between the seven-bladed beta-propeller domains of the 2 proteins. The PeBoW complex associates with the 66S pre-ribosome.

It is found in the nucleus. It localises to the nucleolus. Its subcellular location is the nucleoplasm. Functionally, component of the PeBoW complex, which is required for maturation of 28S and 5.8S ribosomal RNAs and formation of the 60S ribosome. This Xenopus laevis (African clawed frog) protein is Ribosome biogenesis protein bop1-B (bop1-b).